We begin with the raw amino-acid sequence, 908 residues long: Transcriptional repressor ILP1 (908 aa).

Disordered stretches follow at residues 1–113 (MGSN…PQAG) and 238–277 (VGPR…EEDK). Low complexity predominate over residues 25–47 (ATPSSKPTSTLSSSKPKTLSASA). Residues 426–453 (MQNKGSLIEEIEDQMKELNEKHALSILE) are a coiled coil. The segment covering 513–530 (EFGRDENLQKRREVEQRA) has biased composition (basic and acidic residues). The tract at residues 513–574 (EFGRDENLQK…ESDTETSAYK (62 aa)) is disordered.

This sequence belongs to the GCF family. As to quaternary structure, interacts with STIPL1/NTR1.

The protein resides in the nucleus. Transcriptional repressor regulating endoreduplication through control of A-type cyclins expression. Does not bind to promoter sequences (in vitro) and may act by interacting with tissue-specific transcription factors. Enhances the endocycle in endoreduplicating cells in seedlings. Required for efficient splicing. The polypeptide is Transcriptional repressor ILP1 (Arabidopsis thaliana (Mouse-ear cress)).